The chain runs to 503 residues: Arabinose import ATP-binding protein AraG 1 (503 aa).

2 consecutive ABC transporter domains span residues 5-240 (LRFD…MVGR) and 251-497 (RALG…LPQT). 37-44 (GENGAGKS) is a binding site for ATP.

This sequence belongs to the ABC transporter superfamily. Arabinose importer (TC 3.A.1.2.2) family. The complex is composed of two ATP-binding proteins (AraG), two transmembrane proteins (AraH) and a solute-binding protein (AraF).

Its subcellular location is the cell inner membrane. It carries out the reaction L-arabinose(out) + ATP + H2O = L-arabinose(in) + ADP + phosphate + H(+). Part of the ABC transporter complex AraFGH involved in arabinose import. Responsible for energy coupling to the transport system. The sequence is that of Arabinose import ATP-binding protein AraG 1 from Burkholderia lata (strain ATCC 17760 / DSM 23089 / LMG 22485 / NCIMB 9086 / R18194 / 383).